The chain runs to 366 residues: Chitoporin (366 aa).

An N-terminal signal peptide occupies residues 1–23; sequence MDKMFKRTVIGAAVALASTGLMA.

It belongs to the Gram-negative porin family.

It is found in the cell outer membrane. Functionally, involved in the uptake of chitosugars. The sequence is that of Chitoporin (chiP) from Vibrio furnissii.